The primary structure comprises 293 residues: 1D-myo-inositol 2-acetamido-2-deoxy-alpha-D-glucopyranoside deacetylase (293 aa).

Zn(2+) contacts are provided by His-16, Asp-19, and His-156.

It belongs to the MshB deacetylase family. Requires Zn(2+) as cofactor.

It catalyses the reaction 1D-myo-inositol 2-acetamido-2-deoxy-alpha-D-glucopyranoside + H2O = 1D-myo-inositol 2-amino-2-deoxy-alpha-D-glucopyranoside + acetate. Functionally, catalyzes the deacetylation of 1D-myo-inositol 2-acetamido-2-deoxy-alpha-D-glucopyranoside (GlcNAc-Ins) in the mycothiol biosynthesis pathway. The polypeptide is 1D-myo-inositol 2-acetamido-2-deoxy-alpha-D-glucopyranoside deacetylase (Nakamurella multipartita (strain ATCC 700099 / DSM 44233 / CIP 104796 / JCM 9543 / NBRC 105858 / Y-104) (Microsphaera multipartita)).